Here is a 115-residue protein sequence, read N- to C-terminus: Pro-neuregulin-4, membrane-bound isoform (115 aa).

The Extracellular portion of the chain corresponds to 1–62; it reads MPTDHEQPCG…SSIPSESNLS (62 aa). One can recognise an EGF-like domain in the interval 5 to 46; the sequence is HEQPCGPRHRSFCLNGGICYVIPTIPSPFCRCIENYTGARCE. Intrachain disulfides connect Cys-9–Cys-23, Cys-17–Cys-34, and Cys-36–Cys-45. N-linked (GlcNAc...) asparagine glycosylation is found at Asn-39 and Asn-60. Residues 63–83 traverse the membrane as a helical segment; it reads AAFVVLAVLLTLTIAALCFLC. Residues 84-115 lie on the Cytoplasmic side of the membrane; the sequence is RKGHLQRASSVQCEISLVETNNTRTRHSHREH.

It belongs to the neuregulin family. Interacts with ERBB4. Post-translationally, proteolytic cleavage close to the plasma membrane on the external face leads to the release of the soluble growth factor form. Extensive glycosylation precedes the proteolytic cleavage. Highly expressed in pancreas; weakly expressed in muscle.

Its subcellular location is the cell membrane. It is found in the secreted. Low affinity ligand for the ERBB4 tyrosine kinase receptor. Concomitantly recruits ERBB1 and ERBB2 coreceptors, resulting in ligand-stimulated tyrosine phosphorylation and activation of the ERBB receptors. Does not bind to the ERBB1, ERBB2 and ERBB3 receptors. The polypeptide is Pro-neuregulin-4, membrane-bound isoform (Nrg4) (Mus musculus (Mouse)).